A 541-amino-acid chain; its full sequence is Chloride channel CLIC-like protein 1 (541 aa).

The signal sequence occupies residues 1-18 (MLCSLLLCGCLLLITGYA). Residues 19-184 (HDDDWIDPTD…EDYFGVDPYN (166 aa)) lie on the Lumenal side of the membrane. The helical transmembrane segment at 185 to 205 (VFMVLLCLLCIVALVATELWT) threads the bilayer. Over 206-217 (YVRWHTQLKRVC) the chain is Cytoplasmic. Residues 218 to 238 (IISFLVSLGWNWIYLYKVAFA) form a helical membrane-spanning segment. Over 239-329 (QHQANVAKMA…GEFIKALMKE (91 aa)) the chain is Lumenal. The helical transmembrane segment at 330–350 (IPVLLQIPVLVILALAVLGFC) threads the bilayer. The Cytoplasmic segment spans residues 351–541 (YGAGQSVPML…GTDPVSSPCG (191 aa)). The interval 362–381 (HFRGPEREPPRALEPDDRRR) is disordered. A compositionally biased stretch (basic and acidic residues) spans 364–381 (RGPEREPPRALEPDDRRR). Phosphoserine occurs at positions 434 and 438. At Thr-482 the chain carries Phosphothreonine. Ser-504 carries the phosphoserine modification. The span at 511-522 (QLKTDSECRPHS) shows a compositional bias: basic and acidic residues. Positions 511 to 541 (QLKTDSECRPHSTEAAAAAARGTDPVSSPCG) are disordered.

It belongs to the chloride channel MCLC family. Homomultimers. Interacts with mitochondrial protein PIGBOS1 (via C-terminus); the interaction occurs at the mitochondria-associated endoplasmic reticulum (ER) membrane, a zone of contact between the ER and mitochondrial membranes, but does not appear to play a role in ER-mitochondria tethering and is not affected by ER stress. Interacts with CALR. In terms of tissue distribution, expressed in testis (spermatocytes), liver and lung (at protein level). Expressed in spleen, liver, testis, kidney, heart, brain and lung.

The protein localises to the endoplasmic reticulum membrane. The enzyme catalyses chloride(in) = chloride(out). The catalysed reaction is bromide(in) = bromide(out). It catalyses the reaction nitrate(in) = nitrate(out). It carries out the reaction fluoride(in) = fluoride(out). In terms of biological role, anion-selective channel with Ca(2+)-dependent and voltage-independent gating. Permeable to small monovalent anions with selectivity for bromide &gt; chloride &gt; nitrate &gt; fluoride. Operates in the endoplasmic reticulum (ER) membrane where it mediates chloride efflux to compensate for the loss of positive charges from the ER lumen upon Ca(2+) release. Contributes to the maintenance of ER Ca(2+) pools and activation of unfolded protein response to prevent accumulation of misfolded proteins in the ER lumen. Particularly involved in ER homeostasis mechanisms underlying motor neurons and retinal photoreceptors survival. The polypeptide is Chloride channel CLIC-like protein 1 (Rattus norvegicus (Rat)).